We begin with the raw amino-acid sequence, 476 residues long: ATP synthase subunit beta (476 aa).

154–161 (GGAGVGKT) lines the ATP pocket.

This sequence belongs to the ATPase alpha/beta chains family. As to quaternary structure, F-type ATPases have 2 components, CF(1) - the catalytic core - and CF(0) - the membrane proton channel. CF(1) has five subunits: alpha(3), beta(3), gamma(1), delta(1), epsilon(1). CF(0) has four main subunits: a(1), b(1), b'(1) and c(9-12).

It localises to the cell inner membrane. The enzyme catalyses ATP + H2O + 4 H(+)(in) = ADP + phosphate + 5 H(+)(out). In terms of biological role, produces ATP from ADP in the presence of a proton gradient across the membrane. The catalytic sites are hosted primarily by the beta subunits. The polypeptide is ATP synthase subunit beta (Rhodopseudomonas palustris (strain ATCC BAA-98 / CGA009)).